A 126-amino-acid chain; its full sequence is MSSIETLVEEIGKLTLTEASELVKALEEKFGVSAAPAVVAGGMAAAPAGEAAAAEEKTEFDVVLKAAGAQKINVIKVVRAITGLGLKEAKEMVDGAPKTVKEAVSKDEAEKIAKELKDAGAEVELN.

This sequence belongs to the bacterial ribosomal protein bL12 family. Homodimer. Part of the ribosomal stalk of the 50S ribosomal subunit. Forms a multimeric L10(L12)X complex, where L10 forms an elongated spine to which 2 to 4 L12 dimers bind in a sequential fashion. Binds GTP-bound translation factors.

Its function is as follows. Forms part of the ribosomal stalk which helps the ribosome interact with GTP-bound translation factors. Is thus essential for accurate translation. The sequence is that of Large ribosomal subunit protein bL12 from Chlorobaculum parvum (strain DSM 263 / NCIMB 8327) (Chlorobium vibrioforme subsp. thiosulfatophilum).